Reading from the N-terminus, the 406-residue chain is Terminal uridylyltransferase 7 (406 aa).

Residues M1–H15 constitute a mitochondrion transit peptide. UTP is bound by residues S54 and S64–D65. Residues D65 and D67 each coordinate Mg(2+). UTP is bound by residues G138 to S142, K164, K168, and N181 to F183.

Belongs to the DNA polymerase type-B-like family. In terms of assembly, component of the mitochondrial RNA editing core complex-like (RECC-like), also known as the editosome-like complex; only a small proportion of MEAT1 associates with the complex. Interacts with RNA-editing ligase REL1. It depends on Mg(2+) as a cofactor.

It localises to the mitochondrion matrix. It catalyses the reaction RNA(n) + UTP = RNA(n)-3'-uridine ribonucleotide + diphosphate. Its function is as follows. Terminal uridylyltransferase which, as part of the mitochondrial RNA editing core-like complex (RECC-like), is involved in the post-transcriptional editing of mitochondrial RNA, a process involving the addition and deletion of uridine (U) nucleotides in the pre-mRNA. Specifically, catalyzes the addition of U to single-stranded RNA with a preference for a 3'-terminal U and adds the number of Us specified by a guide RNA (gRNA) to precleaved double-stranded RNA editing substrates. Essential for insect and bloodstream developmental forms viability. The polypeptide is Terminal uridylyltransferase 7 (Trypanosoma brucei brucei).